Consider the following 226-residue polypeptide: Small ribosomal subunit protein uS3 (226 aa).

One can recognise a KH type-2 domain in the interval 39-107 (VRNFIRKKLA…PVHINIEEIR (69 aa)).

It belongs to the universal ribosomal protein uS3 family. Part of the 30S ribosomal subunit. Forms a tight complex with proteins S10 and S14.

Its function is as follows. Binds the lower part of the 30S subunit head. Binds mRNA in the 70S ribosome, positioning it for translation. The chain is Small ribosomal subunit protein uS3 from Alkalilimnicola ehrlichii (strain ATCC BAA-1101 / DSM 17681 / MLHE-1).